Consider the following 726-residue polypeptide: Ribonuclease R (726 aa).

The RNB domain occupies Arg264 to Leu592. The S1 motif domain maps to Gly645–Val726.

Belongs to the RNR ribonuclease family. RNase R subfamily.

The protein resides in the cytoplasm. It carries out the reaction Exonucleolytic cleavage in the 3'- to 5'-direction to yield nucleoside 5'-phosphates.. Functionally, 3'-5' exoribonuclease that releases 5'-nucleoside monophosphates and is involved in maturation of structured RNAs. In Mycoplasma pneumoniae (strain ATCC 29342 / M129 / Subtype 1) (Mycoplasmoides pneumoniae), this protein is Ribonuclease R.